A 460-amino-acid chain; its full sequence is Probable glucan endo-1,3-beta-glucosidase eglC (460 aa).

Residues 1–18 (MQLAQLAAFAMTLATSEA) form the signal peptide. Glu-128 serves as the catalytic Proton donor. N-linked (GlcNAc...) asparagine glycosylation occurs at Asn-183. Glu-239 serves as the catalytic Nucleophile. N-linked (GlcNAc...) asparagine glycans are attached at residues Asn-312, Asn-367, and Asn-373. Positions 379–437 (RPSGSASARPSAGAISSGSGSSSSGSGSSGSTGTSATSGQSSSSGSSAAAGSSSPAAFS) are disordered. Positions 380 to 437 (PSGSASARPSAGAISSGSGSSSSGSGSSGSTGTSATSGQSSSSGSSAAAGSSSPAAFS) are enriched in low complexity. Ser-430 carries GPI-anchor amidated serine lipidation. Residues 431-460 (SSPAAFSGASTLSGSLFGAVVAVFMTLAAL) constitute a propeptide, removed in mature form.

It belongs to the glycosyl hydrolase 17 family. In terms of processing, the GPI-anchor is attached to the protein in the endoplasmic reticulum and serves to target the protein to the cell surface. There, the glucosamine-inositol phospholipid moiety is cleaved off and the GPI-modified mannoprotein is covalently attached via its lipidless GPI glycan remnant to the 1,6-beta-glucan of the outer cell wall layer.

It localises to the cell membrane. The protein localises to the secreted. Its subcellular location is the cell wall. The catalysed reaction is Hydrolysis of (1-&gt;3)-beta-D-glucosidic linkages in (1-&gt;3)-beta-D-glucans.. Its function is as follows. Glucanases play a role in cell expansion during growth, in cell-cell fusion during mating, and in spore release during sporulation. This enzyme may be involved in beta-glucan degradation and also function biosynthetically as a transglycosylase. This chain is Probable glucan endo-1,3-beta-glucosidase eglC (eglC), found in Aspergillus niger (strain ATCC MYA-4892 / CBS 513.88 / FGSC A1513).